A 126-amino-acid chain; its full sequence is Glycine cleavage system H protein (126 aa).

The Lipoyl-binding domain maps to 20-102 (IGTIGITDYA…LGDGWFFKVR (83 aa)). Lys-61 bears the N6-lipoyllysine mark.

Belongs to the GcvH family. As to quaternary structure, the glycine cleavage system is composed of four proteins: P, T, L and H. Requires (R)-lipoate as cofactor.

Its function is as follows. The glycine cleavage system catalyzes the degradation of glycine. The H protein shuttles the methylamine group of glycine from the P protein to the T protein. The sequence is that of Glycine cleavage system H protein from Rhodospirillum rubrum (strain ATCC 11170 / ATH 1.1.1 / DSM 467 / LMG 4362 / NCIMB 8255 / S1).